We begin with the raw amino-acid sequence, 20 residues long: 23 kDa cell wall protein (20 aa).

It is found in the secreted. The protein localises to the cell wall. The polypeptide is 23 kDa cell wall protein (Solanum lycopersicum (Tomato)).